A 231-amino-acid polypeptide reads, in one-letter code: Ion-translocating oxidoreductase complex subunit E (231 aa).

The next 6 helical transmembrane spans lie at 18–38 (ALVQ…ATNA), 39–59 (LGLG…ISTL), 63–83 (TPAE…VSAV), 86–106 (LINA…PLIV), 125–145 (ALSA…MFVL), and 182–202 (PFLL…MLAG).

It belongs to the NqrDE/RnfAE family. In terms of assembly, the complex is composed of six subunits: RsxA, RsxB, RsxC, RsxD, RsxE and RsxG.

It localises to the cell inner membrane. Its function is as follows. Part of a membrane-bound complex that couples electron transfer with translocation of ions across the membrane. Required to maintain the reduced state of SoxR. The sequence is that of Ion-translocating oxidoreductase complex subunit E from Escherichia coli (strain SE11).